The chain runs to 171 residues: Probable chorismate pyruvate-lyase (171 aa).

4 residues coordinate substrate: Met-36, Arg-78, Leu-116, and Glu-157.

The protein belongs to the UbiC family.

It localises to the cytoplasm. It carries out the reaction chorismate = 4-hydroxybenzoate + pyruvate. Its pathway is cofactor biosynthesis; ubiquinone biosynthesis. Functionally, removes the pyruvyl group from chorismate, with concomitant aromatization of the ring, to provide 4-hydroxybenzoate (4HB) for the ubiquinone pathway. The polypeptide is Probable chorismate pyruvate-lyase (Bartonella henselae (strain ATCC 49882 / DSM 28221 / CCUG 30454 / Houston 1) (Rochalimaea henselae)).